The following is a 339-amino-acid chain: mRNA cap guanine-N(7) methyltransferase 2 (339 aa).

Residues 1-277 (MAVTPHHRLY…LYSTFVFQKP (277 aa)) enclose the mRNA cap 0 methyltransferase domain. S-adenosyl-L-methionine is bound by residues K14, D54, and 82 to 83 (DP). Residues 314–339 (VSRTDILPPADNEKGILGPGPADMRL) form a disordered region.

It belongs to the class I-like SAM-binding methyltransferase superfamily. mRNA cap 0 methyltransferase family.

It localises to the nucleus. The enzyme catalyses a 5'-end (5'-triphosphoguanosine)-ribonucleoside in mRNA + S-adenosyl-L-methionine = a 5'-end (N(7)-methyl 5'-triphosphoguanosine)-ribonucleoside in mRNA + S-adenosyl-L-homocysteine. MRNA-capping methyltransferase that methylates the N7 position of the added guanosine to the 5'-cap structure of mRNAs. Binds RNA containing 5'-terminal GpppC. The sequence is that of mRNA cap guanine-N(7) methyltransferase 2 from Oryza sativa subsp. japonica (Rice).